A 1486-amino-acid polypeptide reads, in one-letter code: Rap guanine nucleotide exchange factor 2 (1486 aa).

Disordered stretches follow at residues 40-59 (HVSS…SSSL) and 68-101 (SEAG…SDPL). The span at 83-94 (VDSEDDDDEEDI) shows a compositional bias: acidic residues. 135–252 (AFANMTMSVR…QKVEEEGEIV (118 aa)) provides a ligand contact to a nucleoside 3',5'-cyclic phosphate. One can recognise an N-terminal Ras-GEF domain in the interval 267-380 (KGHIVIKGTS…RLLNIACAAK (114 aa)). The region spanning 385–468 (LMTLTKPARE…LSITVKTNLF (84 aa)) is the PDZ domain. Phosphoserine is present on Ser501. The 87-residue stretch at 606–692 (PDQVLRVFKA…GRYYLKNNME (87 aa)) folds into the Ras-associating domain. Position 644 is a phosphothreonine (Thr644). Positions 717–944 (STVEVATQLS…SQGSTNATVL (228 aa)) constitute a Ras-GEF domain. Phosphoserine occurs at positions 806, 930, 933, and 1022. The segment at 1002–1049 (PATNTLPKNPTDKKPVKSETSPVAPRAGLQPKAQPQPQPPQPPHKLNQ) is disordered. Positions 1035 to 1044 (QPQPQPPQPP) are enriched in pro residues. Phosphoserine occurs at positions 1077, 1086, 1092, 1113, 1117, 1156, and 1173. 4 disordered regions span residues 1090–1176 (EGSL…SVSI), 1221–1254 (PSTE…SGSH), 1303–1357 (KYSR…DSSS), and 1391–1486 (GRYR…VSAV). Low complexity-rich tracts occupy residues 1105–1122 (SNTS…QSSP) and 1138–1159 (SDSG…SFDS). Polar residues-rich tracts occupy residues 1244 to 1254 (GSWTSCSSGSH) and 1304 to 1328 (YSRQ…SSTG). The span at 1475 to 1486 (AEEDEDEQVSAV) shows a compositional bias: acidic residues.

It belongs to the RAPGEF2 family. As to quaternary structure, found in a complex, at least composed of KIDINS220, MAGI2, NTRK1 and RAPGEF2; the complex is mainly formed at late endosomes in a neuronal growth factor (NGF)-dependent manner. Interacts (via C-terminal domain) with NEDD4 (via WW domains); this interaction leads to ubiquitination and degradation via the proteasome pathway in a cAMP-independent manner. Interacts with MAGI1 (via PDZ domain). Interacts with ADRB1 (via C-terminal PDZ motif); the interaction is direct. Interacts (via Ras-associating domain) with RAP1A (via GTP-bound active form). Interacts weakly with HRAS (via GDP- and GTP-bound forms). Interacts (via C-terminal domain) with MAGI2 (via PDZ and WW domains). Interacts with CDH1 and TJP1. Interacts with CTNNB1. In terms of processing, ubiquitinated by NEDD4, leading to proteasomal degradation. Post-translationally, phosphorylation by PLK2 promotes its activity.

The protein localises to the cytoplasm. It is found in the perinuclear region. The protein resides in the cell membrane. It localises to the late endosome. Its subcellular location is the cell junction. Its function is as follows. Functions as a guanine nucleotide exchange factor (GEF), which activates Rap and Ras family of small GTPases by exchanging bound GDP for free GTP in a cAMP-dependent manner. Serves as a link between cell surface receptors and Rap/Ras GTPases in intracellular signaling cascades. Also acts as an effector for Rap1 by direct association with Rap1-GTP thereby leading to the amplification of Rap1-mediated signaling. Shows weak activity on HRAS. It is controversial whether RAPGEF2 binds cAMP and cGMP or not. Its binding to ligand-activated beta-1 adrenergic receptor ADRB1 leads to the Ras activation through the G(s)-alpha signaling pathway. Involved in the cAMP-induced Ras and Erk1/2 signaling pathway that leads to sustained inhibition of long term melanogenesis by reducing dendrite extension and melanin synthesis. Also provides inhibitory signals for cell proliferation of melanoma cells and promotes their apoptosis in a cAMP-independent nanner. Regulates cAMP-induced neuritogenesis by mediating the Rap1/B-Raf/ERK signaling through a pathway that is independent on both PKA and RAPGEF3/RAPGEF4. Involved in neuron migration and in the formation of the major forebrain fiber connections forming the corpus callosum, the anterior commissure and the hippocampal commissure during brain development. Involved in neuronal growth factor (NGF)-induced sustained activation of Rap1 at late endosomes and in brain-derived neurotrophic factor (BDNF)-induced axon outgrowth of hippocampal neurons. Plays a role in the regulation of embryonic blood vessel formation and in the establishment of basal junction integrity and endothelial barrier function. May be involved in the regulation of the vascular endothelial growth factor receptor KDR and cadherin CDH5 expression at allantois endothelial cell-cell junctions. Binds to cAMP. The polypeptide is Rap guanine nucleotide exchange factor 2 (RAPGEF2) (Bos taurus (Bovine)).